Consider the following 314-residue polypeptide: 2,3-dihydroxyphenylpropionate/2,3-dihydroxicinnamic acid 1,2-dioxygenase (314 aa).

H115 (proton donor) is an active-site residue. Residue H179 is the Proton acceptor of the active site.

Belongs to the LigB/MhpB extradiol dioxygenase family. Homotetramer. Fe(2+) serves as cofactor.

The catalysed reaction is 3-(2,3-dihydroxyphenyl)propanoate + O2 = (2Z,4E)-2-hydroxy-6-oxonona-2,4-dienedioate + H(+). The enzyme catalyses (2E)-3-(2,3-dihydroxyphenyl)prop-2-enoate + O2 = (2Z,4E,7E)-2-hydroxy-6-oxonona-2,4,7-trienedioate + H(+). Its pathway is aromatic compound metabolism; 3-phenylpropanoate degradation. Functionally, catalyzes the non-heme iron(II)-dependent oxidative cleavage of 2,3-dihydroxyphenylpropionic acid and 2,3-dihydroxicinnamic acid into 2-hydroxy-6-ketononadienedioate and 2-hydroxy-6-ketononatrienedioate, respectively. This is 2,3-dihydroxyphenylpropionate/2,3-dihydroxicinnamic acid 1,2-dioxygenase from Rhodococcus jostii (strain RHA1).